A 304-amino-acid chain; its full sequence is Oxygen-dependent coproporphyrinogen-III oxidase (304 aa).

Serine 94 contributes to the substrate binding site. 2 residues coordinate a divalent metal cation: histidine 98 and histidine 108. Residue histidine 108 is the Proton donor of the active site. 110 to 112 (NVR) contributes to the substrate binding site. A divalent metal cation is bound by residues histidine 147 and histidine 177. The tract at residues 242-277 (YVEFNLVYDRGTLFGLQTGGRTESILMSMPPLVRWE) is important for dimerization. Residue 260–262 (GGR) coordinates substrate.

It belongs to the aerobic coproporphyrinogen-III oxidase family. Homodimer. The cofactor is a divalent metal cation.

The protein localises to the cytoplasm. It catalyses the reaction coproporphyrinogen III + O2 + 2 H(+) = protoporphyrinogen IX + 2 CO2 + 2 H2O. The protein operates within porphyrin-containing compound metabolism; protoporphyrin-IX biosynthesis; protoporphyrinogen-IX from coproporphyrinogen-III (O2 route): step 1/1. Involved in the heme biosynthesis. Catalyzes the aerobic oxidative decarboxylation of propionate groups of rings A and B of coproporphyrinogen-III to yield the vinyl groups in protoporphyrinogen-IX. The sequence is that of Oxygen-dependent coproporphyrinogen-III oxidase from Shewanella piezotolerans (strain WP3 / JCM 13877).